The primary structure comprises 69 residues: DNA gyrase inhibitor YacG (69 aa).

Residues 1-15 are compositionally biased toward basic and acidic residues; sequence MSDEPEHTAKVEPLR. Positions 1–22 are disordered; the sequence is MSDEPEHTAKVEPLRKPLPCPE. Zn(2+) contacts are provided by Cys-20, Cys-23, Cys-35, and Cys-39.

It belongs to the DNA gyrase inhibitor YacG family. Interacts with GyrB. Zn(2+) serves as cofactor.

Inhibits all the catalytic activities of DNA gyrase by preventing its interaction with DNA. Acts by binding directly to the C-terminal domain of GyrB, which probably disrupts DNA binding by the gyrase. The protein is DNA gyrase inhibitor YacG of Allorhizobium ampelinum (strain ATCC BAA-846 / DSM 112012 / S4) (Agrobacterium vitis (strain S4)).